We begin with the raw amino-acid sequence, 163 residues long: 6,7-dimethyl-8-ribityllumazine synthase 1 (163 aa).

5-amino-6-(D-ribitylamino)uracil-binding positions include phenylalanine 27, 58 to 60, and 87 to 89; these read ALE and CVV. Residue 92-93 participates in (2S)-2-hydroxy-3-oxobutyl phosphate binding; it reads ET. Residue histidine 95 is the Proton donor of the active site. Asparagine 120 serves as a coordination point for 5-amino-6-(D-ribitylamino)uracil. Residue arginine 134 coordinates (2S)-2-hydroxy-3-oxobutyl phosphate.

This sequence belongs to the DMRL synthase family.

It carries out the reaction (2S)-2-hydroxy-3-oxobutyl phosphate + 5-amino-6-(D-ribitylamino)uracil = 6,7-dimethyl-8-(1-D-ribityl)lumazine + phosphate + 2 H2O + H(+). It functions in the pathway cofactor biosynthesis; riboflavin biosynthesis; riboflavin from 2-hydroxy-3-oxobutyl phosphate and 5-amino-6-(D-ribitylamino)uracil: step 1/2. Its function is as follows. Catalyzes the formation of 6,7-dimethyl-8-ribityllumazine by condensation of 5-amino-6-(D-ribitylamino)uracil with 3,4-dihydroxy-2-butanone 4-phosphate. This is the penultimate step in the biosynthesis of riboflavin. This is 6,7-dimethyl-8-ribityllumazine synthase 1 from Rhodopseudomonas palustris (strain ATCC BAA-98 / CGA009).